Consider the following 751-residue polypeptide: Ribosome biogenesis protein ERB1 (751 aa).

2 disordered regions span residues 1-140 (MALT…GNVP) and 289-336 (SEPS…DPED). 2 stretches are compositionally biased toward acidic residues: residues 34–92 (LTDE…SDSD) and 119–129 (IEPDYDSDSST). Residues 294–305 (SQPPPLPAPKRP) show a composition bias toward pro residues. The span at 323–336 (EEEKQEWLKQDPED) shows a compositional bias: basic and acidic residues. WD repeat units lie at residues 410 to 449 (HPKG…EIRR), 536 to 580 (PSSG…APFK), 582 to 621 (IKGA…KTLQ), 622 to 661 (PGIR…KPYK), 665 to 704 (YHSR…DLMT), and 720 to 751 (TDGL…VWCS).

Belongs to the WD repeat BOP1/ERB1 family. Component of the NOP7 complex, composed of ERB1, NOP7 and YTM1. The complex is held together by ERB1, which interacts with NOP7 via its N-terminal domain and with YTM1 via a high-affinity interaction between the seven-bladed beta-propeller domains of the 2 proteins. The NOP7 complex associates with the 66S pre-ribosome.

The protein resides in the nucleus. It is found in the nucleolus. Its subcellular location is the nucleoplasm. Component of the NOP7 complex, which is required for maturation of the 25S and 5.8S ribosomal RNAs and formation of the 60S ribosome. This Coprinopsis cinerea (strain Okayama-7 / 130 / ATCC MYA-4618 / FGSC 9003) (Inky cap fungus) protein is Ribosome biogenesis protein ERB1.